Reading from the N-terminus, the 517-residue chain is Benzoate 4-monooxygenase bphA (517 aa).

A helical membrane pass occupies residues 4–24 (LLLSPYGAYLGLALLVLYYLL). N-linked (GlcNAc...) asparagine glycans are attached at residues N282 and N325. C461 contacts heme.

Belongs to the cytochrome P450 family. The cofactor is heme.

Its subcellular location is the membrane. The enzyme catalyses benzoate + reduced [NADPH--hemoprotein reductase] + O2 = 4-hydroxybenzoate + oxidized [NADPH--hemoprotein reductase] + H2O + H(+). In terms of biological role, cytochrome P450 monooxygenase; part of the benzoic acid degradation pathway also known as the protocatechuic acid pathway. Benzoic acid debradation begins with the conversion of benzoic acid into 4-hydroxybenzoic acid through hydroxylation by the benzoate-4-monooxygenase bphA, and its partner NADPH-cytochrome P450 reductase cprA which act as a mediator in electron donation from NADPH. 4-Hydroxybenzoic acid is then converted into 3,4-dihydroxybenzoic acid (also called protocatechuic acid) by the p-hydroxybenzoate-m-hydroxylase phhA. Protocatechuic acid is converted into 3-carboxy-cis,cis-muconic acid by the intradiol ring-cleavage dioxygenase prcA, which is further metabolized through the 3-oxoadipate pathway to finally enter the tricarboxylic acid cycle (TCA). Functionally, responsible for cytochrome P450 dependent benzoate hydroxylation in microsomes; requires cprA as the mediator in electron donation from NADPH. This Aspergillus niger protein is Benzoate 4-monooxygenase bphA.